A 334-amino-acid chain; its full sequence is MRPVPLHPDILQAYAVLETGEPVCRELAFALGELHGPDVLDLASLAHKVKLRHGGSSGSIHACSIMNARSGVCSENCRFCAQSAHHQAAIDVYGLVDVDAVLFHARQTASEGISHFGIVTSGFGYKTLSKEFRQILAMIDRLHQELPDLEICASLGVLGEEPALELARHGIAQYNINIQVAPRRYGELIADTHSVDDRIDTIKRLRRNNIDVCCGGIIGVGEQMKERVEMIFAFADLDVSVIPLNILVPIDGTPLEGSPGIPLDDIVKTFALCRLVHPRKIIKIAAGRETVMKDFQGLLMLSGADGLLTGGYLTTRGRATADDRMFMRQLQWFN.

The region spanning 55 to 285 (GSSGSIHACS…VHPRKIIKIA (231 aa)) is the Radical SAM core domain. Positions 73, 77, and 80 each coordinate [4Fe-4S] cluster. The [2Fe-2S] cluster site is built by cysteine 152, cysteine 213, and lysine 283.

The protein belongs to the radical SAM superfamily. Biotin synthase family. In terms of assembly, homodimer. Requires [4Fe-4S] cluster as cofactor. The cofactor is [2Fe-2S] cluster.

The catalysed reaction is (4R,5S)-dethiobiotin + (sulfur carrier)-SH + 2 reduced [2Fe-2S]-[ferredoxin] + 2 S-adenosyl-L-methionine = (sulfur carrier)-H + biotin + 2 5'-deoxyadenosine + 2 L-methionine + 2 oxidized [2Fe-2S]-[ferredoxin]. It functions in the pathway cofactor biosynthesis; biotin biosynthesis; biotin from 7,8-diaminononanoate: step 2/2. Its function is as follows. Catalyzes the conversion of dethiobiotin (DTB) to biotin by the insertion of a sulfur atom into dethiobiotin via a radical-based mechanism. In Chlorobium phaeobacteroides (strain DSM 266 / SMG 266 / 2430), this protein is Biotin synthase.